The sequence spans 222 residues: MEWSESVFDGRRREMVEGLRRSGIMNARVLEAFLEVRRHLFFPESEREHAYDDAAWPIGHGQTISQPYTVAYMTSLLADRVPSGKVLEVGTGSGYQSAILDAMGYRVFTIERVAALYSEALGRFRRFALPVAAKLGDGSEGWPEEAPFNAVLVTAAAPKEPEALLRQLSDNGCLVIPLGGMDVQQMTVITRRGEVFLKERYHEFAFVPLIGREGWEEEQEQS.

The active site involves S65.

It belongs to the methyltransferase superfamily. L-isoaspartyl/D-aspartyl protein methyltransferase family.

It is found in the cytoplasm. The catalysed reaction is [protein]-L-isoaspartate + S-adenosyl-L-methionine = [protein]-L-isoaspartate alpha-methyl ester + S-adenosyl-L-homocysteine. In terms of biological role, catalyzes the methyl esterification of L-isoaspartyl residues in peptides and proteins that result from spontaneous decomposition of normal L-aspartyl and L-asparaginyl residues. It plays a role in the repair and/or degradation of damaged proteins. The protein is Protein-L-isoaspartate O-methyltransferase of Chlorobium luteolum (strain DSM 273 / BCRC 81028 / 2530) (Pelodictyon luteolum).